A 199-amino-acid polypeptide reads, in one-letter code: MTLAGSKAFIGQPAPNFKTTAVVNGDFKEISLGQFKGKYVVLLFYPLDFTFVCPTEIIAFSDRIAEFKQLDVAVMACSTDSHFSHLAWVNTDRKMGGLGQMNIPILAYTNHVISRAYGVLKEDDGIAYRGLFIIDPKGILGQITINDLPVGRSVDETLRLIQAFQFVDKHGEVCPANWHPGSETIKPGVKESKAYFEKH.

One can recognise a Thioredoxin domain in the interval A8–F166. Residue C53 is the Cysteine sulfenic acid (-SOH) intermediate of the active site.

This sequence belongs to the peroxiredoxin family. AhpC/Prx1 subfamily. In terms of assembly, homodimer; disulfide-linked, upon oxidation.

The enzyme catalyses a hydroperoxide + [thioredoxin]-dithiol = an alcohol + [thioredoxin]-disulfide + H2O. Functionally, thiol-specific peroxidase that catalyzes the reduction of hydrogen peroxide and organic hydroperoxides to water and alcohols, respectively. Plays a role in cell protection against oxidative stress by detoxifying peroxides and as sensor of hydrogen peroxide-mediated signaling events. The sequence is that of Peroxiredoxin 2 (tsa-2) from Brugia malayi (Filarial nematode worm).